The following is an 83-amino-acid chain: Disintegrin isoform D-3 (83 aa).

The 82-residue stretch at 2–83 (PPVCGNELLE…GKSSDCPWNH (82 aa)) folds into the Disintegrin domain. 7 disulfide bridges follow: Cys-5-Cys-24, Cys-16-Cys-34, Cys-18-Cys-29, Cys-28-Cys-51, Cys-42-Cys-48, Cys-47-Cys-72, and Cys-60-Cys-79. The Cell attachment site motif lies at 64 to 66 (RGD).

Belongs to the venom metalloproteinase (M12B) family. P-II subfamily. P-IIa sub-subfamily. As to quaternary structure, monomer (disintegrin). Expressed by the venom gland.

The protein localises to the secreted. Its function is as follows. Inhibits fibrinogen interaction with platelets. Acts by binding to alpha-IIb/beta-3 (ITGA2B/ITGB3) on the platelet surface and inhibits aggregation induced by ADP, thrombin, platelet-activating factor and collagen. The protein is Disintegrin isoform D-3 of Bitis arietans (African puff adder).